Here is a 189-residue protein sequence, read N- to C-terminus: Elongation factor P (189 aa).

The protein belongs to the elongation factor P family.

It is found in the cytoplasm. It functions in the pathway protein biosynthesis; polypeptide chain elongation. Functionally, involved in peptide bond synthesis. Stimulates efficient translation and peptide-bond synthesis on native or reconstituted 70S ribosomes in vitro. Probably functions indirectly by altering the affinity of the ribosome for aminoacyl-tRNA, thus increasing their reactivity as acceptors for peptidyl transferase. In Phytoplasma australiense, this protein is Elongation factor P.